The chain runs to 55 residues: uncharacterized protein (55 aa).

A compositionally biased stretch (polar residues) spans 1–15 (MVGQEQLESSPLCQH). Residues 1-26 (MVGQEQLESSPLCQHSDNETETKREC) are disordered. Positions 16–26 (SDNETETKREC) are enriched in basic and acidic residues.

This is an uncharacterized protein from Escherichia coli (strain K12).